The following is a 313-amino-acid chain: Ribosomal RNA small subunit methyltransferase H (313 aa).

S-adenosyl-L-methionine is bound by residues 37 to 39, aspartate 57, phenylalanine 83, aspartate 104, and glutamine 111; that span reads GGH.

The protein belongs to the methyltransferase superfamily. RsmH family.

It is found in the cytoplasm. It carries out the reaction cytidine(1402) in 16S rRNA + S-adenosyl-L-methionine = N(4)-methylcytidine(1402) in 16S rRNA + S-adenosyl-L-homocysteine + H(+). Its function is as follows. Specifically methylates the N4 position of cytidine in position 1402 (C1402) of 16S rRNA. The sequence is that of Ribosomal RNA small subunit methyltransferase H from Mycoplasmoides gallisepticum (strain R(low / passage 15 / clone 2)) (Mycoplasma gallisepticum).